The following is a 287-amino-acid chain: MDSSMSTKKKTKLSVRNQTCFKKSSLSSSSTAKKTTNLSMREQTMFKKALELSTLCNIDVCVIYYGRDGKLIKTWPEDQSKVRDMAERFSRLHERERCKKRTNLSLFLRKKILDDTKLSEKVLEMEDSLESGLRVLQDKLLLLQPEKNQTEFGQTRAVSSTTNPLSPPPSLIEDHRHQQWTEPLMSGVSNTEQDLSTSSLSQNQSRISVFLYNHDNRSFYQVPDSVSSFDQSALLGEQGSGLGSNFDLPPMVFPPQMQTQTPLVPFDQFAAWNQAPSFADPMMFPYN.

The MADS-box domain maps to 30-78 (STAKKTTNLSMREQTMFKKALELSTLCNIDVCVIYYGRDGKLIKTWPED). Residues 151–171 (EFGQTRAVSSTTNPLSPPPSL) form a disordered region.

Interacts with MEE14/CBP1.

It localises to the nucleus. Functionally, probable transcription factor that may function in the maintenance of the proper function of the central cell in pollen tube attraction. The sequence is that of Agamous-like MADS-box protein AGL53 from Arabidopsis thaliana (Mouse-ear cress).